Consider the following 546-residue polypeptide: MAAKEILFDSKAREKLKRGVDKLANAVKVTLGPKGRNVVIEKSFGSPIITKDGVTVAKEIELEDKFENMGAQMVKEVASKTSDIAGDGTTTATILAQAIFTEGVKLVAAGRNPMAIKRGIDKAVASVVAELETLAKPTRDQKEIAQVGTISANSDATIGNIIAEAMNKVGKEGVITVEEAKGMETTLDVVEGMQFDRGYLSPYFITDPERMVCELDEPLILINEKKITAMKDLLPVLEQVAKMSRPLLIVAEDIEGEALATLVVNKLRGTLQVCAVKAPGFGDRRKAMLEDIATLTGGQCVSEDLGIKLENMTLADLGKAKRVIVDKENSTIVDGAGDGDKIKARVKQIRAQIEETTSSYDKEKLQERLAKIVGGVAVINVGAATETEMKEKKARVEDALNATRAAVEEGIVPGGGVALVRCVKSLTGIKAVDDDEQSGIEIVRRAIEEPLRQISGNAGFEGSIVVAKVRDGKDGFGFNAATGEYEDLIKAGVIDPKKVTRIALQNSSSVAGLLLTTEAAIAEKPEPKKDMPPMPGGGMGGMGGMY.

Residues 30-33 (TLGP), K51, 87-91 (DGTTT), G415, 479-481 (NAA), and D495 each bind ATP. The tract at residues 525–546 (PEPKKDMPPMPGGGMGGMGGMY) is disordered. The segment covering 536–546 (GGGMGGMGGMY) has biased composition (gly residues).

The protein belongs to the chaperonin (HSP60) family. In terms of assembly, forms a cylinder of 14 subunits composed of two heptameric rings stacked back-to-back. Interacts with the co-chaperonin GroES.

It localises to the cytoplasm. It carries out the reaction ATP + H2O + a folded polypeptide = ADP + phosphate + an unfolded polypeptide.. Functionally, together with its co-chaperonin GroES, plays an essential role in assisting protein folding. The GroEL-GroES system forms a nano-cage that allows encapsulation of the non-native substrate proteins and provides a physical environment optimized to promote and accelerate protein folding. In Solidesulfovibrio magneticus (strain ATCC 700980 / DSM 13731 / RS-1) (Desulfovibrio magneticus), this protein is Chaperonin GroEL.